Reading from the N-terminus, the 232-residue chain is Ubiquinone biosynthesis O-methyltransferase (232 aa).

The S-adenosyl-L-methionine site is built by Arg-36, Gly-55, Asp-76, and Met-120.

It belongs to the methyltransferase superfamily. UbiG/COQ3 family.

The enzyme catalyses a 3-demethylubiquinol + S-adenosyl-L-methionine = a ubiquinol + S-adenosyl-L-homocysteine + H(+). The catalysed reaction is a 3-(all-trans-polyprenyl)benzene-1,2-diol + S-adenosyl-L-methionine = a 2-methoxy-6-(all-trans-polyprenyl)phenol + S-adenosyl-L-homocysteine + H(+). It participates in cofactor biosynthesis; ubiquinone biosynthesis. Its function is as follows. O-methyltransferase that catalyzes the 2 O-methylation steps in the ubiquinone biosynthetic pathway. This is Ubiquinone biosynthesis O-methyltransferase from Burkholderia cenocepacia (strain ATCC BAA-245 / DSM 16553 / LMG 16656 / NCTC 13227 / J2315 / CF5610) (Burkholderia cepacia (strain J2315)).